The primary structure comprises 430 residues: GTPase Obg (430 aa).

The region spanning Met1–Leu158 is the Obg domain. The disordered stretch occupies residues Lys118–Pro145. One can recognise an OBG-type G domain in the interval Ala159–Glu329. GTP-binding positions include Gly165–Ser172, Phe190–Lys194, Asp212–Gly215, Asn282–Asp285, and Ser310–Ile312. Mg(2+) contacts are provided by Ser172 and Thr192. The 79-residue stretch at Lys352 to Glu430 folds into the OCT domain.

The protein belongs to the TRAFAC class OBG-HflX-like GTPase superfamily. OBG GTPase family. In terms of assembly, monomer. The cofactor is Mg(2+).

The protein resides in the cytoplasm. Functionally, an essential GTPase which binds GTP, GDP and possibly (p)ppGpp with moderate affinity, with high nucleotide exchange rates and a fairly low GTP hydrolysis rate. Plays a role in control of the cell cycle, stress response, ribosome biogenesis and in those bacteria that undergo differentiation, in morphogenesis control. The protein is GTPase Obg of Staphylococcus aureus (strain MRSA252).